The sequence spans 179 residues: Large ribosomal subunit protein uL5 (179 aa).

Belongs to the universal ribosomal protein uL5 family. Part of the 50S ribosomal subunit; part of the 5S rRNA/L5/L18/L25 subcomplex. Contacts the 5S rRNA and the P site tRNA. Forms a bridge to the 30S subunit in the 70S ribosome.

Functionally, this is one of the proteins that bind and probably mediate the attachment of the 5S RNA into the large ribosomal subunit, where it forms part of the central protuberance. In the 70S ribosome it contacts protein S13 of the 30S subunit (bridge B1b), connecting the 2 subunits; this bridge is implicated in subunit movement. Contacts the P site tRNA; the 5S rRNA and some of its associated proteins might help stabilize positioning of ribosome-bound tRNAs. The chain is Large ribosomal subunit protein uL5 from Thioalkalivibrio sulfidiphilus (strain HL-EbGR7).